The chain runs to 660 residues: Solute carrier family 5 member 4 (660 aa).

Topologically, residues 1 to 28 (MASTLSPSTVTKTPGPPEISERIQNAAD) are cytoplasmic. A helical membrane pass occupies residues 29–47 (ISVIVIYFVVVMAVGLWAM). Residues 48–64 (LRTNRGTVGGFFLAGRD) are Extracellular-facing. A helical membrane pass occupies residues 65–85 (VTWWPMGASLFASNIGSGHFV). Residues 86-105 (GLAGTGAASGIAIAAFEWNA) lie on the Cytoplasmic side of the membrane. Residues 106 to 126 (LLLLLVLGWFFVPIYIKAGVM) traverse the membrane as a helical segment. The Extracellular portion of the chain corresponds to 127–171 (TMPEYLRKRFGGKRLQIYLSILSLFICVALRISSDIFSGAIFIKL). A helical membrane pass occupies residues 172 to 191 (ALGLDLYLAIFSLLAITAIY). The Cytoplasmic segment spans residues 192 to 208 (TITGGLASVIYTDTLQT). A helical membrane pass occupies residues 209–229 (IIMLIGSFILMGFAFVEVGGY). The Extracellular portion of the chain corresponds to 230-270 (ESFTEKYMNAIPTIVEGDNLTISPKCYTPQGDSFHIFRDAV). Asparagine 248 is a glycosylation site (N-linked (GlcNAc...) asparagine). The chain crosses the membrane as a helical span at residues 271-291 (TGDIPWPGMIFGMTVVAAWYW). Residues 292-314 (CTDQVIVQRCLSGKDMSHVKAAC) are Cytoplasmic-facing. Residues 315–334 (IMCGYLKLLPMFLMVMPGMI) form a helical membrane-spanning segment. The Extracellular segment spans residues 335–423 (SRILYTEKVA…RKQASEKELL (89 aa)). Residues 424–443 (IAGRLFIILLIVISIVWVPL) traverse the membrane as a helical segment. Topologically, residues 444-455 (VQVAQNGQLFHY) are cytoplasmic. The helical transmembrane segment at 456–476 (IESISSYLGPPIAAVFLLAIF) threads the bilayer. Over 477–526 (CKRVNEQGAFWGLIIGFVMGLIRMIAEFVYGTGSCLAASNCPQIICGVHY) the chain is Extracellular. Residues 527–547 (LYFALILFFVSILVVLAISLL) form a helical membrane-spanning segment. Over 548–638 (TKPIPDVHLY…TDTSEKPLWK (91 aa)) the chain is Cytoplasmic. The chain crosses the membrane as a helical span at residues 639–659 (TIVNINAILLLAVAVFVHGYF).

The protein belongs to the sodium:solute symporter (SSF) (TC 2.A.21) family. Kidney, intestine, liver, skeletal muscle and spleen.

Its subcellular location is the cell membrane. It catalyses the reaction D-glucose(out) + 2 Na(+)(out) = D-glucose(in) + 2 Na(+)(in). With respect to regulation, inhibited by phlorizin. Low-affinity sodium/D-glucose symporter with a great selectivity for sugars (D-glucose &gt;&gt; D-galactose). Na(+) and D-glucose transport are tightly coupled at neutral pH, but at acidic pH, ion transport is uncoupled from sugar transport. In Sus scrofa (Pig), this protein is Solute carrier family 5 member 4.